A 277-amino-acid polypeptide reads, in one-letter code: Putative thiosulfate sulfurtransferase (277 aa).

2 consecutive Rhodanese domains span residues 18 to 125 and 154 to 274; these read DSAN…PLST and SIKI…VPIE. The active-site Cysteine persulfide intermediate is the C233. R238 provides a ligand contact to substrate.

It catalyses the reaction thiosulfate + hydrogen cyanide = thiocyanate + sulfite + 2 H(+). Its function is as follows. May be a sulfotransferase involved in the formation of thiosulfate. This chain is Putative thiosulfate sulfurtransferase (cysA), found in Mycobacterium leprae (strain TN).